The chain runs to 171 residues: uncharacterized protein (171 aa).

A signal peptide spans 1–20 (MRDFYLFLGAVFLLVLGVWA).

This is an uncharacterized protein from Aquifex aeolicus (strain VF5).